The primary structure comprises 251 residues: Triosephosphate isomerase (251 aa).

Residue 9–11 coordinates substrate; it reads NWK. The active-site Electrophile is histidine 95. The active-site Proton acceptor is the glutamate 167. Substrate is bound by residues glycine 173, serine 213, and 234–235; that span reads GG.

This sequence belongs to the triosephosphate isomerase family. In terms of assembly, homodimer.

It is found in the cytoplasm. It carries out the reaction D-glyceraldehyde 3-phosphate = dihydroxyacetone phosphate. It functions in the pathway carbohydrate biosynthesis; gluconeogenesis. It participates in carbohydrate degradation; glycolysis; D-glyceraldehyde 3-phosphate from glycerone phosphate: step 1/1. Involved in the gluconeogenesis. Catalyzes stereospecifically the conversion of dihydroxyacetone phosphate (DHAP) to D-glyceraldehyde-3-phosphate (G3P). The chain is Triosephosphate isomerase from Lactobacillus gasseri (strain ATCC 33323 / DSM 20243 / BCRC 14619 / CIP 102991 / JCM 1131 / KCTC 3163 / NCIMB 11718 / NCTC 13722 / AM63).